Consider the following 308-residue polypeptide: MTKRKHVAVLLGGWSSEREVSLRSGNACADALERRGFEVTRIDVARDIATVLDQLRPDSALMMLHGHPGEDGSIQGVLETLAIPYSHSGVLASALAMQKDLAKTVMKTAGVPVAEGLTLSRDEIARGHVMEPPYVIKPVADGSSVGVYIITEQHQHPPQELFRDDWAYGDKLLVEKYVAGKELTCAVVKGEPTDVIEIVPMVRFYDYEAKYSPGASKHVLPASLLPFVYQEVRRLTLAAHVALGCRGVSRADFRFDDRIEGTGGLVCLEVNTQPGMTETSLVPELAAYAGITFDELVQWMVEDASLDR.

In terms of domain architecture, ATP-grasp spans lysine 103 to glutamate 302. Residue methionine 130–threonine 184 participates in ATP binding. Positions 252, 269, and 271 each coordinate Mg(2+).

The protein belongs to the D-alanine--D-alanine ligase family. It depends on Mg(2+) as a cofactor. Requires Mn(2+) as cofactor.

The protein localises to the cytoplasm. The enzyme catalyses 2 D-alanine + ATP = D-alanyl-D-alanine + ADP + phosphate + H(+). The protein operates within cell wall biogenesis; peptidoglycan biosynthesis. Cell wall formation. This is D-alanine--D-alanine ligase from Rhodopseudomonas palustris (strain BisA53).